A 376-amino-acid chain; its full sequence is MKFEVIKKDGNARRGILTTAHSVIQTPVFMPVGTVGAVKSLDAFDMSEILDAKIILANTYHMYLRPGSKVVREFGGLHGFSKFDRSFLTDSGGFQAFSLRSNTKNDDGGIKFKSHIDGSTHYFTPRSVLDTQYELGSDIMMILDDLVALPAEPKRIDLSIKRTIKWAKEAIDYHKFMQSKGVGLQQNIFGIVQGGTDYEARKFCAEALNEMPFDGLAIGGLSVGESNEAMYDTVEAVMPFMDELRPRYLMGVGTPEDLVENVERGVDMFDCVMPTRNARNGTLFTSFGKINIKSAKFINDHAPIDPQCQCYTCKRYSRGYLNHLFKARELTFFRLASLHNLHYYLNLMKEMREAIEVGEFAKFKRNFYAKRSTDEL.

The active-site Proton acceptor is the aspartate 90. Residues 90-94, aspartate 144, glutamine 193, and glycine 220 each bind substrate; that span reads DSGGF. The RNA binding stretch occupies residues 251–257; sequence GVGTPED. Residue aspartate 270 is the Nucleophile of the active site. Positions 275 to 279 are RNA binding; important for wobble base 34 recognition; it reads TRNAR. Positions 308, 310, 313, and 339 each coordinate Zn(2+).

The protein belongs to the queuine tRNA-ribosyltransferase family. As to quaternary structure, homodimer. Within each dimer, one monomer is responsible for RNA recognition and catalysis, while the other monomer binds to the replacement base PreQ1. Requires Zn(2+) as cofactor.

It carries out the reaction 7-aminomethyl-7-carbaguanine + guanosine(34) in tRNA = 7-aminomethyl-7-carbaguanosine(34) in tRNA + guanine. It participates in tRNA modification; tRNA-queuosine biosynthesis. In terms of biological role, catalyzes the base-exchange of a guanine (G) residue with the queuine precursor 7-aminomethyl-7-deazaguanine (PreQ1) at position 34 (anticodon wobble position) in tRNAs with GU(N) anticodons (tRNA-Asp, -Asn, -His and -Tyr). Catalysis occurs through a double-displacement mechanism. The nucleophile active site attacks the C1' of nucleotide 34 to detach the guanine base from the RNA, forming a covalent enzyme-RNA intermediate. The proton acceptor active site deprotonates the incoming PreQ1, allowing a nucleophilic attack on the C1' of the ribose to form the product. After dissociation, two additional enzymatic reactions on the tRNA convert PreQ1 to queuine (Q), resulting in the hypermodified nucleoside queuosine (7-(((4,5-cis-dihydroxy-2-cyclopenten-1-yl)amino)methyl)-7-deazaguanosine). The protein is Queuine tRNA-ribosyltransferase of Campylobacter concisus (strain 13826).